We begin with the raw amino-acid sequence, 134 residues long: Prefoldin subunit alpha (134 aa).

It belongs to the prefoldin subunit alpha family. As to quaternary structure, heterohexamer of two alpha and four beta subunits.

The protein resides in the cytoplasm. In terms of biological role, molecular chaperone capable of stabilizing a range of proteins. Seems to fulfill an ATP-independent, HSP70-like function in archaeal de novo protein folding. The chain is Prefoldin subunit alpha from Pyrobaculum calidifontis (strain DSM 21063 / JCM 11548 / VA1).